Here is a 441-residue protein sequence, read N- to C-terminus: tRNA modification GTPase MnmE (441 aa).

(6S)-5-formyl-5,6,7,8-tetrahydrofolate is bound by residues arginine 23, glutamate 81, and lysine 121. The region spanning 218–363 is the TrmE-type G domain; the sequence is GFRVAIVGPP…LESWIAAFVS (146 aa). Asparagine 228 contributes to the K(+) binding site. GTP-binding positions include 228–233, 247–253, 272–275, and 326–329; these read NAGKSS, TDIAGTT, DTAG, and NKAD. Serine 232 serves as a coordination point for Mg(2+). The K(+) site is built by threonine 247, isoleucine 249, and threonine 252. Threonine 253 is a binding site for Mg(2+). A (6S)-5-formyl-5,6,7,8-tetrahydrofolate-binding site is contributed by lysine 441.

The protein belongs to the TRAFAC class TrmE-Era-EngA-EngB-Septin-like GTPase superfamily. TrmE GTPase family. Homodimer. Heterotetramer of two MnmE and two MnmG subunits. K(+) serves as cofactor.

It localises to the cytoplasm. In terms of biological role, exhibits a very high intrinsic GTPase hydrolysis rate. Involved in the addition of a carboxymethylaminomethyl (cmnm) group at the wobble position (U34) of certain tRNAs, forming tRNA-cmnm(5)s(2)U34. This chain is tRNA modification GTPase MnmE, found in Hyphomonas neptunium (strain ATCC 15444).